The chain runs to 803 residues: MutS protein homolog 4 (803 aa).

557–564 (GANMSGKS) is a binding site for ATP.

This sequence belongs to the DNA mismatch repair MutS family. As to quaternary structure, heterooligomer of MSH4 and MSH5.

Involved in meiotic recombination. Facilitate crossovers between homologs during meiosis. The protein is MutS protein homolog 4 (MSH4) of Candida albicans (Yeast).